The primary structure comprises 483 residues: Protein nucleotidyltransferase YdiU (483 aa).

G81, G83, R84, K103, D115, G116, R166, and R173 together coordinate ATP. D244 serves as the catalytic Proton acceptor. Residues N245 and D254 each contribute to the Mg(2+) site. D254 provides a ligand contact to ATP.

This sequence belongs to the SELO family. It depends on Mg(2+) as a cofactor. Mn(2+) is required as a cofactor.

The enzyme catalyses L-seryl-[protein] + ATP = 3-O-(5'-adenylyl)-L-seryl-[protein] + diphosphate. The catalysed reaction is L-threonyl-[protein] + ATP = 3-O-(5'-adenylyl)-L-threonyl-[protein] + diphosphate. It carries out the reaction L-tyrosyl-[protein] + ATP = O-(5'-adenylyl)-L-tyrosyl-[protein] + diphosphate. It catalyses the reaction L-histidyl-[protein] + UTP = N(tele)-(5'-uridylyl)-L-histidyl-[protein] + diphosphate. The enzyme catalyses L-seryl-[protein] + UTP = O-(5'-uridylyl)-L-seryl-[protein] + diphosphate. The catalysed reaction is L-tyrosyl-[protein] + UTP = O-(5'-uridylyl)-L-tyrosyl-[protein] + diphosphate. Nucleotidyltransferase involved in the post-translational modification of proteins. It can catalyze the addition of adenosine monophosphate (AMP) or uridine monophosphate (UMP) to a protein, resulting in modifications known as AMPylation and UMPylation. In Shewanella pealeana (strain ATCC 700345 / ANG-SQ1), this protein is Protein nucleotidyltransferase YdiU.